The sequence spans 135 residues: Small ribosomal subunit protein uS9 (135 aa).

Positions 108-118 (VGDPRRTEPHK) are enriched in basic and acidic residues. Residues 108-135 (VGDPRRTEPHKPNRSTKGPRAKRQKSYR) are disordered. A compositionally biased stretch (basic residues) spans 119 to 135 (PNRSTKGPRAKRQKSYR).

Belongs to the universal ribosomal protein uS9 family.

This is Small ribosomal subunit protein uS9 (rps9) from Pyrococcus horikoshii (strain ATCC 700860 / DSM 12428 / JCM 9974 / NBRC 100139 / OT-3).